Consider the following 559-residue polypeptide: MVSLLSCGTSASSHIVKKALTRLSLAMAAGLCFNLAAQEPTPPIITPTSPSVTIPLQTYADEQAIVKSANNLNTETKVRFAKTANFDSDTVVKIARKLAQKPYVELKDPLPPGLAKISYDEYRDIRFKPEASIWKAEGLPYQMQLFHRGFYFQDLIEIALVEGKQASHLAYNSEFFTAGDVLSQRLPTQDIGYSGLRIHYPLNNPAYFDELMVFQGASYFRALGKGSDYGLSSRGLALNTAEPEGEEFPIFRAFWVERPNTDSNLIVVHALLDSPSVAGAYRFSVRPGENTHIDVEATLFPRVDLVKVGLAPSTSMFLHSMNGRQNTDDFRPEVHDSDALLILNGRGERLWRPLANPKQLQVSAFMDNSPQGFGLIQRERSFDAYQDLEAHYERRPSLWVEPVGNWGAGEVVLTEIPTDSEIHDNIVSYWKPKQPIAAGSEFHFTYRLIWGSEPEVDDGTVIVARTASGRAEIAKATPRRLFVIDYQVKEGNNDEIPVAKVQSSAGVVTNVVVSRQPKTNGYRLAFEMDPQDAELIELRAELKFTGPRDVETWLYRWTL.

An N-terminal signal peptide occupies residues 1-37 (MVSLLSCGTSASSHIVKKALTRLSLAMAAGLCFNLAA).

The protein belongs to the OpgD/OpgG family.

The protein localises to the periplasm. It participates in glycan metabolism; osmoregulated periplasmic glucan (OPG) biosynthesis. In terms of biological role, involved in the biosynthesis of osmoregulated periplasmic glucans (OPGs). The polypeptide is Glucans biosynthesis protein G (Shewanella frigidimarina (strain NCIMB 400)).